The sequence spans 110 residues: Nucleoid-associated protein SYO3AOP1_1366 (110 aa).

It belongs to the YbaB/EbfC family. In terms of assembly, homodimer.

The protein resides in the cytoplasm. It localises to the nucleoid. In terms of biological role, binds to DNA and alters its conformation. May be involved in regulation of gene expression, nucleoid organization and DNA protection. The polypeptide is Nucleoid-associated protein SYO3AOP1_1366 (Sulfurihydrogenibium sp. (strain YO3AOP1)).